The primary structure comprises 86 residues: Toxin 3FTx-Dis4 (86 aa).

An N-terminal signal peptide occupies residues 1-19 (MKTLLLSLVMVGFMYLVSG). Disulfide bonds link Cys24–Cys45, Cys38–Cys63, and Cys79–Cys84.

It belongs to the three-finger toxin family. Ancestral subfamily. As to expression, expressed by the venom gland.

The protein resides in the secreted. This chain is Toxin 3FTx-Dis4, found in Dispholidus typus (Boomslang).